The sequence spans 360 residues: Phosphoserine aminotransferase (360 aa).

Position 41 (Arg41) interacts with L-glutamate. Pyridoxal 5'-phosphate is bound by residues 75–76 (AS), Trp101, Thr151, Asp171, and Gln194. At Lys195 the chain carries N6-(pyridoxal phosphate)lysine. 236–237 (NT) contacts pyridoxal 5'-phosphate.

Belongs to the class-V pyridoxal-phosphate-dependent aminotransferase family. SerC subfamily. In terms of assembly, homodimer. Requires pyridoxal 5'-phosphate as cofactor.

It is found in the cytoplasm. The enzyme catalyses O-phospho-L-serine + 2-oxoglutarate = 3-phosphooxypyruvate + L-glutamate. The catalysed reaction is 4-(phosphooxy)-L-threonine + 2-oxoglutarate = (R)-3-hydroxy-2-oxo-4-phosphooxybutanoate + L-glutamate. Its pathway is amino-acid biosynthesis; L-serine biosynthesis; L-serine from 3-phospho-D-glycerate: step 2/3. The protein operates within cofactor biosynthesis; pyridoxine 5'-phosphate biosynthesis; pyridoxine 5'-phosphate from D-erythrose 4-phosphate: step 3/5. Catalyzes the reversible conversion of 3-phosphohydroxypyruvate to phosphoserine and of 3-hydroxy-2-oxo-4-phosphonooxybutanoate to phosphohydroxythreonine. This chain is Phosphoserine aminotransferase, found in Herpetosiphon aurantiacus (strain ATCC 23779 / DSM 785 / 114-95).